Reading from the N-terminus, the 239-residue chain is Aspartate/glutamate leucyltransferase (239 aa).

It belongs to the R-transferase family. Bpt subfamily.

It is found in the cytoplasm. The catalysed reaction is N-terminal L-glutamyl-[protein] + L-leucyl-tRNA(Leu) = N-terminal L-leucyl-L-glutamyl-[protein] + tRNA(Leu) + H(+). The enzyme catalyses N-terminal L-aspartyl-[protein] + L-leucyl-tRNA(Leu) = N-terminal L-leucyl-L-aspartyl-[protein] + tRNA(Leu) + H(+). Functionally, functions in the N-end rule pathway of protein degradation where it conjugates Leu from its aminoacyl-tRNA to the N-termini of proteins containing an N-terminal aspartate or glutamate. The chain is Aspartate/glutamate leucyltransferase from Alkalilimnicola ehrlichii (strain ATCC BAA-1101 / DSM 17681 / MLHE-1).